A 118-amino-acid polypeptide reads, in one-letter code: MSITSLKNQKEFELINKLGKKLHERYFILVIATKLPKIFLESKYNTFLGIKVSRKLNKKAVVRNKIKRRIRHLIRIIVSDSSFKDIKFAMIIIPRKGFEEINFSHLNYELSKLILRNI.

This sequence belongs to the RnpA family. As to quaternary structure, consists of a catalytic RNA component (M1 or rnpB) and a protein subunit.

It carries out the reaction Endonucleolytic cleavage of RNA, removing 5'-extranucleotides from tRNA precursor.. In terms of biological role, RNaseP catalyzes the removal of the 5'-leader sequence from pre-tRNA to produce the mature 5'-terminus. It can also cleave other RNA substrates such as 4.5S RNA. The protein component plays an auxiliary but essential role in vivo by binding to the 5'-leader sequence and broadening the substrate specificity of the ribozyme. The protein is Ribonuclease P protein component of Rickettsia rickettsii (strain Iowa).